The following is a 710-amino-acid chain: Integrator complex subunit 10 (710 aa).

Residues Ser-231, Ser-381, and Ser-382 each carry the phosphoserine modification. Lys-464 participates in a covalent cross-link: Glycyl lysine isopeptide (Lys-Gly) (interchain with G-Cter in SUMO2).

Belongs to the Integrator subunit 10 family. In terms of assembly, component of the Integrator complex, composed of core subunits INTS1, INTS2, INTS3, INTS4, INTS5, INTS6, INTS7, INTS8, INTS9/RC74, INTS10, INTS11/CPSF3L, INTS12, INTS13, INTS14 and INTS15. The core complex associates with protein phosphatase 2A subunits PPP2CA and PPP2R1A, to form the Integrator-PP2A (INTAC) complex. INTS10 is part of the tail subcomplex, composed of INTS10, INTS13, INTS14 and INTS15.

The protein resides in the nucleus. In terms of biological role, component of the integrator complex, a multiprotein complex that terminates RNA polymerase II (Pol II) transcription in the promoter-proximal region of genes. The integrator complex provides a quality checkpoint during transcription elongation by driving premature transcription termination of transcripts that are unfavorably configured for transcriptional elongation: the complex terminates transcription by (1) catalyzing dephosphorylation of the C-terminal domain (CTD) of Pol II subunit POLR2A/RPB1 and SUPT5H/SPT5, (2) degrading the exiting nascent RNA transcript via endonuclease activity and (3) promoting the release of Pol II from bound DNA. The integrator complex is also involved in terminating the synthesis of non-coding Pol II transcripts, such as enhancer RNAs (eRNAs), small nuclear RNAs (snRNAs), telomerase RNAs and long non-coding RNAs (lncRNAs). Within the integrator complex, INTS10 is part of the integrator tail module that acts as a platform for the recruitment of transcription factors at promoters. May be not involved in the recruitment of cytoplasmic dynein to the nuclear envelope, probably as component of the integrator complex. The protein is Integrator complex subunit 10 (Ints10) of Mus musculus (Mouse).